A 488-amino-acid chain; its full sequence is Cobyric acid synthase (488 aa).

Positions 247-440 (LLRVIVPVLP…VHGVFDEPTA (194 aa)) constitute a GATase cobBQ-type domain. The active-site Nucleophile is the cysteine 328. The active site involves histidine 432.

Belongs to the CobB/CobQ family. CobQ subfamily.

It participates in cofactor biosynthesis; adenosylcobalamin biosynthesis. Catalyzes amidations at positions B, D, E, and G on adenosylcobyrinic A,C-diamide. NH(2) groups are provided by glutamine, and one molecule of ATP is hydrogenolyzed for each amidation. The sequence is that of Cobyric acid synthase from Cupriavidus pinatubonensis (strain JMP 134 / LMG 1197) (Cupriavidus necator (strain JMP 134)).